Consider the following 311-residue polypeptide: Methionyl-tRNA formyltransferase (311 aa).

110–113 contacts (6S)-5,6,7,8-tetrahydrofolate; sequence SLLP.

The protein belongs to the Fmt family.

The catalysed reaction is L-methionyl-tRNA(fMet) + (6R)-10-formyltetrahydrofolate = N-formyl-L-methionyl-tRNA(fMet) + (6S)-5,6,7,8-tetrahydrofolate + H(+). Its function is as follows. Attaches a formyl group to the free amino group of methionyl-tRNA(fMet). The formyl group appears to play a dual role in the initiator identity of N-formylmethionyl-tRNA by promoting its recognition by IF2 and preventing the misappropriation of this tRNA by the elongation apparatus. This is Methionyl-tRNA formyltransferase from Sulfurihydrogenibium sp. (strain YO3AOP1).